We begin with the raw amino-acid sequence, 278 residues long: Transmembrane protein 45B (278 aa).

7 consecutive transmembrane segments (helical) span residues 7-27, 49-69, 95-115, 117-137, 149-169, 183-203, and 215-235; these read HALP…KYPL, IIEG…EQFV, YLFF…FHIV, LGLD…LFYF, IHSL…LEVI, LLIL…PPFG, and IMFI…IVAI. Residues S273 and S275 each carry the phosphoserine modification.

It belongs to the TMEM45 family.

The protein localises to the endosome membrane. The protein resides in the lysosome membrane. Its subcellular location is the golgi apparatus. It is found in the trans-Golgi network membrane. Plays a role in innate immunity. The protein is Transmembrane protein 45B (Tmem45b) of Mus musculus (Mouse).